The sequence spans 109 residues: uncharacterized protein (109 aa).

The signal sequence occupies residues 1 to 22 (MKPYSTLFLFTLLTLTTVPAQA). Positions 39–109 (AYNPDHGRDY…ERRMEDEYGQ (71 aa)) are disordered. Over residues 41–109 (NPDHGRDYED…ERRMEDEYGQ (69 aa)) the composition is skewed to basic and acidic residues.

This is an uncharacterized protein from Shigella dysenteriae serotype 1 (strain Sd197).